The sequence spans 314 residues: MKQYLDLEKYVLENGTQKGDRTGTGTISTFGYQMRFDLQEGFPIMTTKRVPFKLVVSELLWFLHGDTNIRYLLQHNNNIWNEWAFERFVKSDDYKGEDMTDFGLRAERDPAFKEVYQAEMEKFKTRILEDEAFANKYGELGNIYGKQWREWKTSQGETIDQLADLIEMIKTNPNSRRLIVSAWNPEDIPNMALPPCHSLFQFYVADGKLSCQLYQRSADIFLGVPFNIASYALLTHLIAREVGLEVGEFIHTMGDAHLYNNHIEQVKEQLSRTPHKLPKLVLSDKPATIFDFDVADISLDGYNPDPAIKAPISV.

DUMP-binding positions include Arg21 and 176 to 177 (RR). The active-site Nucleophile is Cys196. Residues 216–219 (RSAD), Asn227, and 257–259 (HLY) each bind dUMP. A (6R)-5,10-methylene-5,6,7,8-tetrahydrofolate-binding site is contributed by Asp219. Ser313 provides a ligand contact to (6R)-5,10-methylene-5,6,7,8-tetrahydrofolate.

It belongs to the thymidylate synthase family. Bacterial-type ThyA subfamily. As to quaternary structure, homodimer.

It localises to the cytoplasm. The enzyme catalyses dUMP + (6R)-5,10-methylene-5,6,7,8-tetrahydrofolate = 7,8-dihydrofolate + dTMP. It participates in pyrimidine metabolism; dTTP biosynthesis. Its function is as follows. Catalyzes the reductive methylation of 2'-deoxyuridine-5'-monophosphate (dUMP) to 2'-deoxythymidine-5'-monophosphate (dTMP) while utilizing 5,10-methylenetetrahydrofolate (mTHF) as the methyl donor and reductant in the reaction, yielding dihydrofolate (DHF) as a by-product. This enzymatic reaction provides an intracellular de novo source of dTMP, an essential precursor for DNA biosynthesis. This is Thymidylate synthase from Listeria monocytogenes serotype 4a (strain HCC23).